The following is a 526-amino-acid chain: Dolichyl pyrophosphate Glc1Man9GlcNAc2 alpha-1,3-glucosyltransferase (526 aa).

A run of 11 helical transmembrane segments spans residues 9-29 (AGGHWFSALALGVTLLKCLLI), 108-128 (FSVILTDALFVYAVHECCKCI), 143-163 (FILSVLLLWNFGLLIVDHIHF), 188-208 (GALLFAVLLHLKHIYLYVAPA), 238-258 (VTSLGLIVFLVSALSLGPFLA), 334-354 (PLATLICTLIAILPSVFCLWF), 361-380 (GFLRCLVLCALSSFMFGWHV), 400-422 (AGDATVFLILATTGHYSLFPLLF), 427-449 (LPIKILLMLLFTVYSISSLKTLF), 461-481 (TVYLLGLGPLEVCCEFLLPFT), and 487-507 (YPFIPLLLTSVYCAVGITYAW).

It belongs to the ALG6/ALG8 glucosyltransferase family.

The protein localises to the endoplasmic reticulum membrane. It carries out the reaction an alpha-D-Glc-(1-&gt;3)-alpha-D-Man-(1-&gt;2)-alpha-D-Man-(1-&gt;2)-alpha-D-Man-(1-&gt;3)-[alpha-D-Man-(1-&gt;2)-alpha-D-Man-(1-&gt;3)-[alpha-D-Man-(1-&gt;2)-alpha-D-Man-(1-&gt;6)]-alpha-D-Man-(1-&gt;6)]-beta-D-Man-(1-&gt;4)-beta-D-GlcNAc-(1-&gt;4)-alpha-D-GlcNAc-diphospho-di-trans,poly-cis-dolichol + a di-trans,poly-cis-dolichyl beta-D-glucosyl phosphate = an alpha-D-Glc-(1-&gt;3)-alpha-D-Glc-(1-&gt;3)-alpha-D-Man-(1-&gt;2)-alpha-D-Man-(1-&gt;2)-alpha-D-Man-(1-&gt;3)-[alpha-D-Man-(1-&gt;2)-alpha-D-Man-(1-&gt;3)-[alpha-D-Man-(1-&gt;2)-alpha-D-Man-(1-&gt;6)]-alpha-D-Man-(1-&gt;6)]-beta-D-Man-(1-&gt;4)-beta-D-GlcNAc-(1-&gt;4)-alpha-D-GlcNAc-diphospho-di-trans,poly-cis-dolichol + a di-trans,poly-cis-dolichyl phosphate + H(+). Its pathway is protein modification; protein glycosylation. In terms of biological role, dolichyl pyrophosphate Glc1Man9GlcNAc2 alpha-1,3-glucosyltransferase that operates in the biosynthetic pathway of dolichol-linked oligosaccharides, the glycan precursors employed in protein asparagine (N)-glycosylation. The assembly of dolichol-linked oligosaccharides begins on the cytosolic side of the endoplasmic reticulum membrane and finishes in its lumen. The sequential addition of sugars to dolichol pyrophosphate produces dolichol-linked oligosaccharides containing fourteen sugars, including two GlcNAcs, nine mannoses and three glucoses. Once assembled, the oligosaccharide is transferred from the lipid to nascent proteins by oligosaccharyltransferases. In the lumen of the endoplasmic reticulum, adds the second glucose residue from dolichyl phosphate glucose (Dol-P-Glc) onto the lipid-linked oligosaccharide intermediate Glc(1)Man(9)GlcNAc(2)-PP-Dol to produce Glc(2)Man(9)GlcNAc(2)-PP-Dol. Glc(2)Man(9)GlcNAc(2)-PP-Dol is a substrate for ALG10, the following enzyme in the biosynthetic pathway. Required for PKD1/Polycystin-1 maturation and localization to the plasma membrane of the primary cilia. The protein is Dolichyl pyrophosphate Glc1Man9GlcNAc2 alpha-1,3-glucosyltransferase of Mus musculus (Mouse).